We begin with the raw amino-acid sequence, 157 residues long: Serine-protein kinase RsbW (157 aa).

Belongs to the anti-sigma-factor family.

It carries out the reaction L-seryl-[protein] + ATP = O-phospho-L-seryl-[protein] + ADP + H(+). It catalyses the reaction L-threonyl-[protein] + ATP = O-phospho-L-threonyl-[protein] + ADP + H(+). In terms of biological role, negative regulator of sigma-B activity. Phosphorylates and inactivates its specific antagonist protein, RsbV. Upon phosphorylation of RsbV, RsbW is released and binds to sigma-B, thereby blocking its ability to form an RNA polymerase holoenzyme (E-sigma-B). The polypeptide is Serine-protein kinase RsbW (Listeria innocua serovar 6a (strain ATCC BAA-680 / CLIP 11262)).